The sequence spans 637 residues: Threonine--tRNA ligase (637 aa).

Residues 1-61 (MPVITLPNGS…EQDAALSIVT (61 aa)) enclose the TGS domain. Residues 242–533 (DHRKLGKKFD…LIENYEGAFP (292 aa)) form a catalytic region. Zn(2+) contacts are provided by C333, H384, and H510.

This sequence belongs to the class-II aminoacyl-tRNA synthetase family. In terms of assembly, homodimer. It depends on Zn(2+) as a cofactor.

The protein localises to the cytoplasm. It catalyses the reaction tRNA(Thr) + L-threonine + ATP = L-threonyl-tRNA(Thr) + AMP + diphosphate + H(+). Catalyzes the attachment of threonine to tRNA(Thr) in a two-step reaction: L-threonine is first activated by ATP to form Thr-AMP and then transferred to the acceptor end of tRNA(Thr). Also edits incorrectly charged L-seryl-tRNA(Thr). The chain is Threonine--tRNA ligase from Teredinibacter turnerae (strain ATCC 39867 / T7901).